The sequence spans 80 residues: Type VII secretion system accessory factor EsaB (80 aa).

It belongs to the EsaB family.

It is found in the cytoplasm. Its function is as follows. Seems to regulate secreted factors that contribute to the establishment of persistent infections in the host. The polypeptide is Type VII secretion system accessory factor EsaB (Staphylococcus aureus (strain COL)).